The sequence spans 121 residues: Large ribosomal subunit protein uL14 (121 aa).

Belongs to the universal ribosomal protein uL14 family. In terms of assembly, part of the 50S ribosomal subunit. Forms a cluster with proteins L3 and L19. In the 70S ribosome, L14 and L19 interact and together make contacts with the 16S rRNA in bridges B5 and B8.

Functionally, binds to 23S rRNA. Forms part of two intersubunit bridges in the 70S ribosome. The polypeptide is Large ribosomal subunit protein uL14 (Prochlorococcus marinus (strain MIT 9515)).